Consider the following 236-residue polypeptide: UPF0257 lipoprotein YnfC (236 aa).

Positions 1–16 are cleaved as a signal peptide; the sequence is MKYKLLPCLLAILLTG. Residue Cys-17 is the site of N-palmitoyl cysteine attachment. The S-diacylglycerol cysteine moiety is linked to residue Cys-17.

It belongs to the UPF0257 family.

The protein resides in the cell membrane. The chain is UPF0257 lipoprotein YnfC from Escherichia coli O127:H6 (strain E2348/69 / EPEC).